A 107-amino-acid polypeptide reads, in one-letter code: Large ribosomal subunit protein uL24 (107 aa).

It belongs to the universal ribosomal protein uL24 family. Part of the 50S ribosomal subunit.

One of two assembly initiator proteins, it binds directly to the 5'-end of the 23S rRNA, where it nucleates assembly of the 50S subunit. Functionally, one of the proteins that surrounds the polypeptide exit tunnel on the outside of the subunit. The polypeptide is Large ribosomal subunit protein uL24 (Solidesulfovibrio magneticus (strain ATCC 700980 / DSM 13731 / RS-1) (Desulfovibrio magneticus)).